Here is a 156-residue protein sequence, read N- to C-terminus: Large ribosomal subunit protein uL22 (156 aa).

The segment at 114–156 (VESRPKQEKGGKAGASKASSRAARAQGSKAAAAKKTESKGGTS) is disordered. The segment covering 127–146 (GASKASSRAARAQGSKAAAA) has biased composition (low complexity). A compositionally biased stretch (basic and acidic residues) spans 147–156 (KKTESKGGTS).

It belongs to the universal ribosomal protein uL22 family. In terms of assembly, part of the 50S ribosomal subunit.

In terms of biological role, this protein binds specifically to 23S rRNA; its binding is stimulated by other ribosomal proteins, e.g. L4, L17, and L20. It is important during the early stages of 50S assembly. It makes multiple contacts with different domains of the 23S rRNA in the assembled 50S subunit and ribosome. The globular domain of the protein is located near the polypeptide exit tunnel on the outside of the subunit, while an extended beta-hairpin is found that lines the wall of the exit tunnel in the center of the 70S ribosome. The chain is Large ribosomal subunit protein uL22 from Mycobacteroides abscessus (strain ATCC 19977 / DSM 44196 / CCUG 20993 / CIP 104536 / JCM 13569 / NCTC 13031 / TMC 1543 / L948) (Mycobacterium abscessus).